We begin with the raw amino-acid sequence, 262 residues long: uncharacterized protein (262 aa).

The first 22 residues, 1–22 (MGYLKRFALYISVMILIFAIAG), serve as a signal peptide directing secretion. C23 is lipidated: N-palmitoyl cysteine. Residue C23 is the site of S-diacylglycerol cysteine attachment.

The protein belongs to the staphylococcal tandem lipoprotein family.

Its subcellular location is the cell membrane. This is an uncharacterized protein from Staphylococcus aureus (strain NCTC 8325 / PS 47).